Here is a 296-residue protein sequence, read N- to C-terminus: Ribonuclease MRP protein subunit POP4 (296 aa).

Disordered regions lie at residues 29–74 (LLQQ…VDPK) and 148–173 (SASGSKKASQKDSKRSKSRMSMKRLK). The span at 36 to 56 (KNEKDKKGTSDVDVSMKESHQ) shows a compositional bias: basic and acidic residues. The span at 57 to 66 (ADSLPTPSKT) shows a compositional bias: polar residues. The Nuclear localization signal motif lies at 160–167 (SKRSKSRM). Basic residues predominate over residues 163–173 (SKSRMSMKRLK).

The protein belongs to the eukaryotic/archaeal RNase P protein component 1 family. In terms of assembly, component of nuclear RNase MRP complexes. Several subunits of RNase P are also part of the RNase MRP complex. RNase MRP consists of a catalytic RNA moiety and several protein subunits.

Its subcellular location is the nucleus. Component of the MRP ribonuclease complex, which cleaves pre-rRNA sequences. Required for rRNA maturation, including 5.8S rRNA processing. Seems not involved in tRNA maturation. The polypeptide is Ribonuclease MRP protein subunit POP4 (Arabidopsis thaliana (Mouse-ear cress)).